A 243-amino-acid polypeptide reads, in one-letter code: Isoprenyl transferase 2 (243 aa).

Residue aspartate 23 is part of the active site. Aspartate 23 lines the Mg(2+) pocket. Substrate contacts are provided by residues 24–27 (GNGR), tryptophan 28, arginine 36, histidine 40, and 68–70 (STE). Residue asparagine 71 is the Proton acceptor of the active site. Substrate-binding positions include tryptophan 72, arginine 74, arginine 191, and 197–199 (RTS). A Mg(2+)-binding site is contributed by glutamate 210.

It belongs to the UPP synthase family. As to quaternary structure, homodimer. Mg(2+) is required as a cofactor.

Catalyzes the condensation of isopentenyl diphosphate (IPP) with allylic pyrophosphates generating different type of terpenoids. This Corynebacterium glutamicum (strain ATCC 13032 / DSM 20300 / JCM 1318 / BCRC 11384 / CCUG 27702 / LMG 3730 / NBRC 12168 / NCIMB 10025 / NRRL B-2784 / 534) protein is Isoprenyl transferase 2.